The following is a 537-amino-acid chain: Zinc metalloproteinase nas-23 (537 aa).

Residues 1-16 (MRFLILVLAGSIGIYG) form the signal peptide. Residues 17-111 (VNLPKIPKLS…EQLDHSRTKR (95 aa)) constitute a propeptide that is removed on maturation. Asparagine 77 carries an N-linked (GlcNAc...) asparagine glycan. Residues 116 to 311 (NAMYPKTIWL…AKINRHYNCE (196 aa)) form the Peptidase M12A domain. 6 disulfides stabilise this stretch: cysteine 156/cysteine 310, cysteine 178/cysteine 199, cysteine 314/cysteine 334, cysteine 336/cysteine 345, cysteine 356/cysteine 385, and cysteine 412/cysteine 433. Histidine 207 contributes to the Zn(2+) binding site. Glutamate 208 is an active-site residue. Positions 211 and 217 each coordinate Zn(2+). The region spanning 306–346 (RHYNCEKNCKNKITCLNGGYQHPKNCKICVCPPGYGGSDCK) is the EGF-like domain. The 116-residue stretch at 356–471 (CTGVLVAGET…VQLRYSTVDG (116 aa)) folds into the CUB domain. Residue asparagine 481 is glycosylated (N-linked (GlcNAc...) asparagine).

Zn(2+) serves as cofactor. In terms of tissue distribution, expressed in the hypodermis, rectum and to a lesser extent in pharyngeal muscles and intestine.

The protein localises to the secreted. Its function is as follows. Metalloprotease. This chain is Zinc metalloproteinase nas-23 (nas-23), found in Caenorhabditis elegans.